A 751-amino-acid chain; its full sequence is Ribosomal RNA large subunit methyltransferase K/L (751 aa).

The THUMP domain occupies 44–155 (LAYRTCLWSR…KNKLVLSIDL (112 aa)).

Belongs to the methyltransferase superfamily. RlmKL family.

It localises to the cytoplasm. It catalyses the reaction guanosine(2445) in 23S rRNA + S-adenosyl-L-methionine = N(2)-methylguanosine(2445) in 23S rRNA + S-adenosyl-L-homocysteine + H(+). It carries out the reaction guanosine(2069) in 23S rRNA + S-adenosyl-L-methionine = N(2)-methylguanosine(2069) in 23S rRNA + S-adenosyl-L-homocysteine + H(+). Functionally, specifically methylates the guanine in position 2445 (m2G2445) and the guanine in position 2069 (m7G2069) of 23S rRNA. This chain is Ribosomal RNA large subunit methyltransferase K/L, found in Cellvibrio japonicus (strain Ueda107) (Pseudomonas fluorescens subsp. cellulosa).